A 160-amino-acid polypeptide reads, in one-letter code: Cytochrome b6-f complex subunit 4 (160 aa).

Helical transmembrane passes span 36-56, 95-115, and 127-147; these read LLYT…GLAV, LLGI…PFIE, and PIAM…GVAA.

This sequence belongs to the cytochrome b family. PetD subfamily. The 4 large subunits of the cytochrome b6-f complex are cytochrome b6, subunit IV (17 kDa polypeptide, PetD), cytochrome f and the Rieske protein, while the 4 small subunits are PetG, PetL, PetM and PetN. The complex functions as a dimer.

It localises to the cellular thylakoid membrane. Component of the cytochrome b6-f complex, which mediates electron transfer between photosystem II (PSII) and photosystem I (PSI), cyclic electron flow around PSI, and state transitions. The protein is Cytochrome b6-f complex subunit 4 of Prochlorothrix hollandica.